A 241-amino-acid chain; its full sequence is Triosephosphate isomerase (241 aa).

9–11 (NWK) is a substrate binding site. The active-site Electrophile is the His-96. The active-site Proton acceptor is the Glu-165. Substrate-binding positions include Gly-171, Ser-204, and 225–226 (GG).

It belongs to the triosephosphate isomerase family. In terms of assembly, homodimer.

It localises to the cytoplasm. The catalysed reaction is D-glyceraldehyde 3-phosphate = dihydroxyacetone phosphate. It participates in carbohydrate biosynthesis; gluconeogenesis. It functions in the pathway carbohydrate degradation; glycolysis; D-glyceraldehyde 3-phosphate from glycerone phosphate: step 1/1. Involved in the gluconeogenesis. Catalyzes stereospecifically the conversion of dihydroxyacetone phosphate (DHAP) to D-glyceraldehyde-3-phosphate (G3P). This is Triosephosphate isomerase from Prochlorococcus marinus (strain MIT 9515).